Reading from the N-terminus, the 131-residue chain is Small ribosomal subunit protein uS11 (131 aa).

Belongs to the universal ribosomal protein uS11 family. Part of the 30S ribosomal subunit. Interacts with proteins S7 and S18. Binds to IF-3.

In terms of biological role, located on the platform of the 30S subunit, it bridges several disparate RNA helices of the 16S rRNA. Forms part of the Shine-Dalgarno cleft in the 70S ribosome. The polypeptide is Small ribosomal subunit protein uS11 (Helicobacter acinonychis (strain Sheeba)).